The chain runs to 170 residues: Alpha-crystallin A chain (170 aa).

The residue at position 1 (M1) is an N-acetylmethionine. The tract at residues 1 to 63 (MDVTIQHPWF…RTALDSGISE (63 aa)) is required for complex formation with BFSP1 and BFSP2. Q6 carries the deamidated glutamine; partial modification. Residue S45 is modified to Phosphoserine. At Q50 the chain carries Deamidated glutamine; partial. The 110-residue stretch at 52 to 161 (LFRTALDSGI…GERTIPVSRE (110 aa)) folds into the sHSP domain. At K99 the chain carries N6-acetyllysine. H100 contacts Zn(2+). N101 is subject to Deamidated asparagine; partial. 3 residues coordinate Zn(2+): E102, H107, and H151. Residues 144–170 (PKLVDPSHGERTIPVSREEKPSSAPSS) form a disordered region. Residues 148 to 164 (DPSHGERTIPVSREEKP) are compositionally biased toward basic and acidic residues. S159 is a glycosylation site (O-linked (GlcNAc) serine).

Belongs to the small heat shock protein (HSP20) family. As to quaternary structure, heteromer composed of three CRYAA and one CRYAB subunits. Inter-subunit bridging via zinc ions enhances stability, which is crucial as there is no protein turn over in the lens. Can also form homodimers and homotetramers (dimers of dimers) which serve as the building blocks of homooligomers. Within homooligomers, the zinc-binding motif is created from residues of 3 different molecules. His-100 and Glu-102 from one molecule are ligands of the zinc ion, and His-107 and His-151 residues from additional molecules complete the site with tetrahedral coordination geometry. Part of a complex required for lens intermediate filament formation composed of BFSP1, BFSP2 and CRYAA. Post-translationally, acetylation at Lys-99 may increase chaperone activity. In terms of processing, undergoes age-dependent proteolytical cleavage at the C-terminus.

Its subcellular location is the cytoplasm. The protein resides in the nucleus. Contributes to the transparency and refractive index of the lens. Acts as a chaperone, preventing aggregation of various proteins under a wide range of stress conditions. Required for the correct formation of lens intermediate filaments as part of a complex composed of BFSP1, BFSP2 and CRYAA. The polypeptide is Alpha-crystallin A chain (CRYAA) (Tamandua mexicana (Northern Tamandua)).